Reading from the N-terminus, the 199-residue chain is Imidazoleglycerol-phosphate dehydratase (199 aa).

It belongs to the imidazoleglycerol-phosphate dehydratase family.

The protein localises to the cytoplasm. The catalysed reaction is D-erythro-1-(imidazol-4-yl)glycerol 3-phosphate = 3-(imidazol-4-yl)-2-oxopropyl phosphate + H2O. It participates in amino-acid biosynthesis; L-histidine biosynthesis; L-histidine from 5-phospho-alpha-D-ribose 1-diphosphate: step 6/9. In Kineococcus radiotolerans (strain ATCC BAA-149 / DSM 14245 / SRS30216), this protein is Imidazoleglycerol-phosphate dehydratase.